Reading from the N-terminus, the 427-residue chain is Enolase (427 aa).

Gln163 contacts (2R)-2-phosphoglycerate. Glu205 serves as the catalytic Proton donor. Mg(2+)-binding residues include Asp242, Glu288, and Asp315. Residues Lys340, Arg369, Ser370, and Lys391 each coordinate (2R)-2-phosphoglycerate. Lys340 functions as the Proton acceptor in the catalytic mechanism.

Belongs to the enolase family. The cofactor is Mg(2+).

The protein resides in the cytoplasm. It localises to the secreted. Its subcellular location is the cell surface. It catalyses the reaction (2R)-2-phosphoglycerate = phosphoenolpyruvate + H2O. Its pathway is carbohydrate degradation; glycolysis; pyruvate from D-glyceraldehyde 3-phosphate: step 4/5. In terms of biological role, catalyzes the reversible conversion of 2-phosphoglycerate (2-PG) into phosphoenolpyruvate (PEP). It is essential for the degradation of carbohydrates via glycolysis. This chain is Enolase, found in Cytophaga hutchinsonii (strain ATCC 33406 / DSM 1761 / CIP 103989 / NBRC 15051 / NCIMB 9469 / D465).